A 98-amino-acid chain; its full sequence is Peptide YY (98 aa).

The signal sequence occupies residues 1–28; that stretch reads MVAVRRPWPVMVAMLLVLLACLGALVDA. Residue S41 is modified to Phosphoserine. Y64 carries the tyrosine amide modification. Residues 68 to 98 constitute a propeptide that is removed on maturation; it reads EVPAALFSKLLFTDDSENLPFRSRPEGVDQW.

The protein belongs to the NPY family. The peptide YY form is cleaved at Pro-30 by the prolyl endopeptidase FAP (seprase) activity (in vitro) to generate peptide YY(3-36).

It is found in the secreted. Its function is as follows. This gut peptide inhibits exocrine pancreatic secretion, has a vasoconstrictory action and inhibitis jejunal and colonic mobility. The chain is Peptide YY (Pyy) from Rattus norvegicus (Rat).